The primary structure comprises 420 residues: Protein disulfide isomerase Creld1 (420 aa).

An N-terminal signal peptide occupies residues 1 to 29 (MAPQPLRGLVPFLLWCLSLFLSLPGPVWL). Residues 30–362 (QPSPPPHSAP…GFFAEMTEDE (333 aa)) lie on the Extracellular side of the membrane. A CXXC motif is present at residues 46–49 (CHTC). Disulfide bonds link C46-C49, C155-C169, C163-C181, and C183-C192. Residues 153-193 (LPCPGGTERPCGGYGQCEGEGTRGGSGHCDCQAGYGGEACG) form the EGF-like 1 domain. An N-linked (GlcNAc...) asparagine glycan is attached at N205. FU repeat units follow at residues 208-255 (HLVC…EQAT) and 268-315 (SYEC…VVCP). Positions 278–281 (CLGC) match the CXXC motif. 4 disulfide bridges follow: C278–C281, C309–C321, C314–C330, and C332–C343. Residues 305-342 (DVDECETVVCPGENEQCENTEGSYRCVCAEGFRQEDGI) form the EGF-like 2; calcium-binding domain. The helical transmembrane segment at 363–383 (MVVLQQMFFGVIICALATLAA) threads the bilayer. K384 is a topological domain (cytoplasmic). The helical transmembrane segment at 385–405 (GDLVFTAIFIGAVAAMTGYWL) threads the bilayer. At 406-420 (SERSDRVLEGFIKGR) the chain is on the extracellular side.

It belongs to the CRELD family.

It localises to the membrane. It catalyses the reaction Catalyzes the rearrangement of -S-S- bonds in proteins.. Its function is as follows. Protein disulfide isomerase. Promotes the localization of acetylcholine receptors (AChRs) to the plasma membrane. The polypeptide is Protein disulfide isomerase Creld1 (Creld1) (Rattus norvegicus (Rat)).